The chain runs to 616 residues: MTEDRAHKVADEPAASGRQSPERKKRKWDQPAEDLVSAAVTAAAVSGMPVMNFGALPGVVLPGVTAYGAATLPSVVPVPYSLPPHIAPSVLQNAAAAAQKLSQAKIPDEVIAREIVINDADPSVRYKLTKRQTQEEIQKCTNTVIITRGKYHPPNLLPDGEKPLYLHISAGSQLKDTAERIKAVDRAASMIEEILKQGTTSESISVPFSSSTGQAVRPFSASVFLGFDADPSLNITARIRGPNDQYINHIMKETGVTVVLRGKDSENLGSCHSEASQQPLHLYLTSMHLKNLEAAKVLAENLLDTVAAEFGASRISSSKVYGAVPPPQQLLAGVDTSGTKSDVHYIVGPNVLSGATHSFASTGVIAPVVAPAVTVQSGAPTYSGVPLPSNMAYPIPPANGGAFYSGYGDIYPQATPLQQLAFTLKHASSSATQAVPVTSTPTSMATKGNSILDAEMDKRSRRKFQELPVSKGPATESQNSQQGSKFVKTGLDSSGNIGSSSIAPPKKVHPGSNGMLPQEEADMPSHLSISTKMLPPPLKSMLPLPPRSMPPPPPKSMPPPPPKFPSDEFLSRNENKFFPLKEPTAPPRSFDAISVLPSERRPREPKEEKNKRHTCV.

Over residues 1-11 (MTEDRAHKVAD) the composition is skewed to basic and acidic residues. The tract at residues 1–32 (MTEDRAHKVADEPAASGRQSPERKKRKWDQPA) is disordered. Residues 198-304 (GTTSESISVP…AKVLAENLLD (107 aa)) enclose the KH domain. Composition is skewed to polar residues over residues 432-449 (TQAV…TKGN), 475-484 (TESQNSQQGS), and 491-502 (LDSSGNIGSSSI). Disordered regions lie at residues 432–455 (TQAV…LDAE) and 467–616 (LPVS…HTCV). A compositionally biased stretch (pro residues) spans 534-564 (LPPPLKSMLPLPPRSMPPPPPKSMPPPPPKF). 2 stretches are compositionally biased toward basic and acidic residues: residues 565–575 (PSDEFLSRNEN) and 598–610 (SERR…EEKN).

In terms of assembly, interacts with RS2. Expressed in vegetative tissues. More abundant in apices and young leaf primordia than in fully expanded leaf tissues.

The protein resides in the nucleus. In Zea mays (Maize), this protein is Protein RIK.